We begin with the raw amino-acid sequence, 92 residues long: Putative membrane protein insertion efficiency factor (92 aa).

This sequence belongs to the UPF0161 family.

It is found in the cell inner membrane. Could be involved in insertion of integral membrane proteins into the membrane. The sequence is that of Putative membrane protein insertion efficiency factor from Synechococcus sp. (strain CC9605).